Here is a 171-residue protein sequence, read N- to C-terminus: Shikimate kinase (171 aa).

Gly-14–Thr-19 is a binding site for ATP. Ser-18 contributes to the Mg(2+) binding site. 3 residues coordinate substrate: Asp-36, Arg-60, and Gly-82. Residue Arg-120 coordinates ATP. Residue Arg-139 participates in substrate binding. Position 156 (Gln-156) interacts with ATP.

This sequence belongs to the shikimate kinase family. As to quaternary structure, monomer. Mg(2+) is required as a cofactor.

The protein localises to the cytoplasm. The catalysed reaction is shikimate + ATP = 3-phosphoshikimate + ADP + H(+). It participates in metabolic intermediate biosynthesis; chorismate biosynthesis; chorismate from D-erythrose 4-phosphate and phosphoenolpyruvate: step 5/7. Catalyzes the specific phosphorylation of the 3-hydroxyl group of shikimic acid using ATP as a cosubstrate. The protein is Shikimate kinase of Shewanella sediminis (strain HAW-EB3).